The following is a 202-amino-acid chain: LexA repressor (202 aa).

A DNA-binding region (H-T-H motif) is located at residues 28-47; the sequence is IREIGDQFGITAKGAYDHLK. Residues Ser126 and Lys163 each act as for autocatalytic cleavage activity in the active site.

The protein belongs to the peptidase S24 family. As to quaternary structure, homodimer.

It carries out the reaction Hydrolysis of Ala-|-Gly bond in repressor LexA.. Functionally, represses a number of genes involved in the response to DNA damage (SOS response), including recA and lexA. In the presence of single-stranded DNA, RecA interacts with LexA causing an autocatalytic cleavage which disrupts the DNA-binding part of LexA, leading to derepression of the SOS regulon and eventually DNA repair. This chain is LexA repressor, found in Leptospira biflexa serovar Patoc (strain Patoc 1 / Ames).